We begin with the raw amino-acid sequence, 151 residues long: uncharacterized protein (151 aa).

This is an uncharacterized protein from Archaeoglobus fulgidus (strain ATCC 49558 / DSM 4304 / JCM 9628 / NBRC 100126 / VC-16).